The primary structure comprises 475 residues: Ribulose bisphosphate carboxylase large chain (475 aa).

Positions 1-2 (MA) are excised as a propeptide. Pro-3 is modified (N-acetylproline). Lys-14 carries the N6,N6,N6-trimethyllysine modification. The substrate site is built by Asn-123 and Thr-173. Lys-175 acts as the Proton acceptor in catalysis. Lys-177 is a binding site for substrate. Mg(2+) is bound by residues Lys-201, Asp-203, and Glu-204. Lys-201 carries the N6-carboxylysine modification. The active-site Proton acceptor is His-294. The substrate site is built by Arg-295, His-327, and Ser-379.

It belongs to the RuBisCO large chain family. Type I subfamily. In terms of assembly, heterohexadecamer of 8 large chains and 8 small chains; disulfide-linked. The disulfide link is formed within the large subunit homodimers. The cofactor is Mg(2+). Post-translationally, the disulfide bond which can form in the large chain dimeric partners within the hexadecamer appears to be associated with oxidative stress and protein turnover.

The protein resides in the plastid. It is found in the chloroplast. It catalyses the reaction 2 (2R)-3-phosphoglycerate + 2 H(+) = D-ribulose 1,5-bisphosphate + CO2 + H2O. It carries out the reaction D-ribulose 1,5-bisphosphate + O2 = 2-phosphoglycolate + (2R)-3-phosphoglycerate + 2 H(+). Its function is as follows. RuBisCO catalyzes two reactions: the carboxylation of D-ribulose 1,5-bisphosphate, the primary event in carbon dioxide fixation, as well as the oxidative fragmentation of the pentose substrate in the photorespiration process. Both reactions occur simultaneously and in competition at the same active site. This is Ribulose bisphosphate carboxylase large chain from Tupiella akineta (Green alga).